A 223-amino-acid polypeptide reads, in one-letter code: Cutinase (223 aa).

The signal sequence occupies residues 1–19 (MKFFAFSMLIGEASPIVLA). Cys-46 and Cys-124 are disulfide-bonded. The active-site Nucleophile is the Ser-135. A disulfide bond links Cys-185 and Cys-192. Residue Asp-189 is part of the active site. His-202 serves as the catalytic Proton donor/acceptor.

Belongs to the cutinase family. The 2 disulfide bonds play a critical role in holding the catalytic residues in juxta-position; reduction of the disulfide bridges results in the complete inactivation of the enzyme.

It is found in the secreted. The catalysed reaction is cutin + H2O = cutin monomers.. Catalyzes the hydrolysis of complex carboxylic polyesters found in the cell wall of plants. Degrades cutin, a macromolecule that forms the structure of the plant cuticle. Allows pathogenic fungi to penetrate through the cuticular barrier into the host plant during the initial stage of fungal infection. The sequence is that of Cutinase (CUT) from Didymella rabiei (Chickpea ascochyta blight fungus).